We begin with the raw amino-acid sequence, 108 residues long: Holo-[acyl-carrier-protein] synthase (108 aa).

Mg(2+)-binding residues include D9 and E54.

The protein belongs to the P-Pant transferase superfamily. AcpS family. Mg(2+) is required as a cofactor.

The protein resides in the cytoplasm. It catalyses the reaction apo-[ACP] + CoA = holo-[ACP] + adenosine 3',5'-bisphosphate + H(+). Functionally, transfers the 4'-phosphopantetheine moiety from coenzyme A to a Ser of acyl-carrier-protein. The sequence is that of Holo-[acyl-carrier-protein] synthase from Mycoplasmopsis pulmonis (strain UAB CTIP) (Mycoplasma pulmonis).